A 262-amino-acid polypeptide reads, in one-letter code: GTP cyclohydrolase 1 type 2 homolog (262 aa).

Positions 65, 102, 222, and 225 each coordinate a divalent metal cation.

The protein belongs to the GTP cyclohydrolase I type 2/NIF3 family. As to quaternary structure, homohexamer.

The protein is GTP cyclohydrolase 1 type 2 homolog of Streptococcus pyogenes serotype M6 (strain ATCC BAA-946 / MGAS10394).